The chain runs to 204 residues: Ribosomal RNA small subunit methyltransferase G (204 aa).

Residues G69, F74, 123 to 124 (IE), and R137 each bind S-adenosyl-L-methionine.

This sequence belongs to the methyltransferase superfamily. RNA methyltransferase RsmG family.

The protein resides in the cytoplasm. The enzyme catalyses guanosine(527) in 16S rRNA + S-adenosyl-L-methionine = N(7)-methylguanosine(527) in 16S rRNA + S-adenosyl-L-homocysteine. Functionally, specifically methylates the N7 position of guanine in position 527 of 16S rRNA. The sequence is that of Ribosomal RNA small subunit methyltransferase G from Ruegeria pomeroyi (strain ATCC 700808 / DSM 15171 / DSS-3) (Silicibacter pomeroyi).